A 266-amino-acid polypeptide reads, in one-letter code: L-aspartate dehydrogenase (266 aa).

2 residues coordinate NAD(+): alanine 123 and asparagine 189. Histidine 219 is a catalytic residue.

This sequence belongs to the L-aspartate dehydrogenase family.

It carries out the reaction L-aspartate + NADP(+) + H2O = oxaloacetate + NH4(+) + NADPH + H(+). It catalyses the reaction L-aspartate + NAD(+) + H2O = oxaloacetate + NH4(+) + NADH + H(+). Its pathway is cofactor biosynthesis; NAD(+) biosynthesis; iminoaspartate from L-aspartate (dehydrogenase route): step 1/1. In terms of biological role, specifically catalyzes the NAD or NADP-dependent dehydrogenation of L-aspartate to iminoaspartate. The sequence is that of L-aspartate dehydrogenase from Cupriavidus necator (strain ATCC 17699 / DSM 428 / KCTC 22496 / NCIMB 10442 / H16 / Stanier 337) (Ralstonia eutropha).